The chain runs to 118 residues: REPTOR-binding partner (118 aa).

Polar residues predominate over residues 1-20 (MADMEIQSNKMSITEETQVQ). A disordered region spans residues 1-53 (MADMEIQSNKMSITEETQVQTRKECGKRGRKPGRKTSTEKLDMKAKLERSRQS). Basic and acidic residues predominate over residues 36-53 (TSTEKLDMKAKLERSRQS). Positions 40-77 (KLDMKAKLERSRQSARECRARKKLRYQYLEELVADREK) are basic motif. The bZIP domain occupies 40–90 (KLDMKAKLERSRQSARECRARKKLRYQYLEELVADREKAVVALRTELERLI). Residues 82–89 (LRTELERL) are leucine-zipper.

It belongs to the bZIP family. ATF subfamily. In terms of assembly, homodimer. Interacts (via C-terminus) with REPTOR (via C-terminus).

The protein resides in the nucleus. Its subcellular location is the chromosome. Transcriptional regulator that acts in the TORC1 signaling pathway to regulate energy homeostasis and promote survival during nutrient deprivation. Interacts with REPTOR to form a transcriptional activator complex that functions downstream of TORC1 to up-regulate the expression of most target genes induced by TORC1 inhibition. In the complex, acts to enhance the binding of the transcriptional activator REPTOR to the regulatory sequences of target genes. Under normal conditions TORC1 is active, inhibiting the formation of the REPTOR/REPTOR-BP complex by phosphorylating REPTOR and mediates its cytoplasmic retention by forming a docking site for 14-3-3 proteins. Upon TORC1 inhibition resulting from nutrient stress, REPTOR is recruited into the nucleus where it interacts with REPTOR-BP and together they maintain organismal metabolism by activating the expression of target stress response genes including those involved in glycogenesis and triglyceride biosynthesis. The complex also appears to negatively regulate some aspects of TORC1-dependent larval growth. This is REPTOR-binding partner from Drosophila melanogaster (Fruit fly).